The sequence spans 638 residues: Phosphomethylpyrimidine synthase (638 aa).

Substrate is bound by residues asparagine 233, methionine 262, tyrosine 291, histidine 327, serine 347–glycine 349, aspartate 388–arginine 391, and glutamate 427. Histidine 431 provides a ligand contact to Zn(2+). Position 454 (tyrosine 454) interacts with substrate. Histidine 495 is a Zn(2+) binding site. Positions 575, 578, and 583 each coordinate [4Fe-4S] cluster.

It belongs to the ThiC family. As to quaternary structure, homodimer. The cofactor is [4Fe-4S] cluster.

It carries out the reaction 5-amino-1-(5-phospho-beta-D-ribosyl)imidazole + S-adenosyl-L-methionine = 4-amino-2-methyl-5-(phosphooxymethyl)pyrimidine + CO + 5'-deoxyadenosine + formate + L-methionine + 3 H(+). It functions in the pathway cofactor biosynthesis; thiamine diphosphate biosynthesis. Its function is as follows. Catalyzes the synthesis of the hydroxymethylpyrimidine phosphate (HMP-P) moiety of thiamine from aminoimidazole ribotide (AIR) in a radical S-adenosyl-L-methionine (SAM)-dependent reaction. The polypeptide is Phosphomethylpyrimidine synthase (Saccharophagus degradans (strain 2-40 / ATCC 43961 / DSM 17024)).